A 726-amino-acid chain; its full sequence is Myb-like protein Z (726 aa).

Disordered stretches follow at residues 15–109, 124–149, 161–239, and 272–303; these read DSND…SLSN, ASPSKSSENSPTIHTSSLSPNSYHPY, HYVS…TKQQ, and LIPSSPTRSPSGGSGSESEENDGESSPNNMRS. Positions 18–39 are enriched in low complexity; the sequence is DNNNNNNNNNNSNNNNNNNNNN. Residues 45–80 are compositionally biased toward polar residues; that stretch reads SSATSSPTGQDSTIDRPNSPSSSIKFTYPSKNSIVT. Residues 81–108 show a composition bias toward low complexity; it reads SPSSLQLPSPSFSSSSSSSSSSSSSSLS. A compositionally biased stretch (polar residues) spans 124–147; the sequence is ASPSKSSENSPTIHTSSLSPNSYH. Positions 165–177 are enriched in low complexity; sequence NNNNNNNNNNNNN. A compositionally biased stretch (polar residues) spans 183 to 209; that stretch reads SSELYNTSPSISSKTTPNGSSTNNSPF. Over residues 221–239 the composition is skewed to low complexity; that stretch reads NNNNNNNNDRNENNTTKQQ. Residues 329–388 form the Myb-like domain; it reads IPIATRKLWSQEECCRLLEMVFQRDPQSVTSKESELRWRSIASTLGRTVTSTRKKYMRLM. A compositionally biased stretch (low complexity) spans 516–651; sequence KQIQQQQKQK…NNNYRSSLSP (136 aa). Residues 516-726 form a disordered region; the sequence is KQIQQQQKQK…NNNNYNNYHN (211 aa). Over residues 661–675 the composition is skewed to polar residues; sequence QSPQQKSNNENQQNF. Positions 709–726 are enriched in low complexity; that stretch reads NLNNNNNNNNNNYNNYHN.

This chain is Myb-like protein Z (mybZ), found in Dictyostelium discoideum (Social amoeba).